Consider the following 701-residue polypeptide: Coiled-coil domain-containing protein 62 (701 aa).

Coiled coils occupy residues 61-197 (ETST…LQAR) and 241-342 (TCVV…QFLN). The segment at 624–652 (KSAEREEESAALPDRRTSANEKDDFSPTS) is disordered. A compositionally biased stretch (basic and acidic residues) spans 636-648 (PDRRTSANEKDDF). 2 consecutive short sequence motifs (LXXLL motif) follow at residues 654–658 (LQRLL) and 670–674 (LSTLL).

As to quaternary structure, interacts with ESR1 and ESR2 in the presence of estradiol/E2. The interaction with ESR2 recruits CCDC62 to ER target genes, including cyclin-D1/CCND1 AP-1 promoter. Interacts with GOPC. As to expression, highly expressed in testis, not detected in other tissues (at protein level). Expressed at low levels in the epididymis, lung, spleen, bladder, kidney, liver, muscle.

It localises to the cytoplasm. Its subcellular location is the nucleus. It is found in the cytoplasmic vesicle. The protein resides in the secretory vesicle. The protein localises to the acrosome. Functionally, nuclear receptor coactivator that can enhance preferentially estrogen receptors ESR1 and ESR2 transactivation. Also modulates progesterone/PGR, glucocorticoid/NR3C1 and androgen/AR receptors transactivation, although at lower level; little effect on vitamin D receptor/VDR. Required for normal spermiogenesis. It probably plays a role in acrosome formation. The protein is Coiled-coil domain-containing protein 62 (Ccdc62) of Mus musculus (Mouse).